Here is a 244-residue protein sequence, read N- to C-terminus: Cobalt transport protein CbiM (244 aa).

Positions 1 to 28 (MKLLKNKKVTFVALLAILAVLSTQSVSA) are cleaved as a signal peptide. The next 6 helical transmembrane spans lie at 36–56 (LPLF…VVGL), 71–91 (TMLA…IPSV), 108–128 (FGPS…ALLL), 135–155 (TLGA…YFVY), 166–186 (PVSI…TTSI), and 208–228 (GVFL…TVVL).

This sequence belongs to the CbiM family. Forms an energy-coupling factor (ECF) transporter complex composed of an ATP-binding protein (A component, CbiO), a transmembrane protein (T component, CbiQ) and 2 possible substrate-capture proteins (S components, CbiM and CbiN) of unknown stoichimetry.

Its subcellular location is the cell membrane. It functions in the pathway cofactor biosynthesis; adenosylcobalamin biosynthesis. Functionally, part of the energy-coupling factor (ECF) transporter complex CbiMNOQ involved in cobalt import. The polypeptide is Cobalt transport protein CbiM (Streptococcus sanguinis (strain SK36)).